Reading from the N-terminus, the 299-residue chain is 4-hydroxy-tetrahydrodipicolinate synthase 2 (299 aa).

Threonine 54 is a pyruvate binding site. Tyrosine 142 serves as the catalytic Proton donor/acceptor. Lysine 170 serves as the catalytic Schiff-base intermediate with substrate. Residue valine 210 participates in pyruvate binding.

The protein belongs to the DapA family. Homotetramer; dimer of dimers.

It is found in the cytoplasm. The enzyme catalyses L-aspartate 4-semialdehyde + pyruvate = (2S,4S)-4-hydroxy-2,3,4,5-tetrahydrodipicolinate + H2O + H(+). It functions in the pathway amino-acid biosynthesis; L-lysine biosynthesis via DAP pathway; (S)-tetrahydrodipicolinate from L-aspartate: step 3/4. Functionally, catalyzes the condensation of (S)-aspartate-beta-semialdehyde [(S)-ASA] and pyruvate to 4-hydroxy-tetrahydrodipicolinate (HTPA). The protein is 4-hydroxy-tetrahydrodipicolinate synthase 2 of Streptomyces coelicolor (strain ATCC BAA-471 / A3(2) / M145).